The chain runs to 320 residues: Aspartate carbamoyltransferase catalytic subunit (320 aa).

Carbamoyl phosphate contacts are provided by arginine 68 and threonine 69. Position 96 (lysine 96) interacts with L-aspartate. Carbamoyl phosphate-binding residues include arginine 118, histidine 148, and glutamine 151. The L-aspartate site is built by arginine 181 and arginine 236. 2 residues coordinate carbamoyl phosphate: glycine 277 and proline 278.

The protein belongs to the aspartate/ornithine carbamoyltransferase superfamily. ATCase family. As to quaternary structure, heterododecamer (2C3:3R2) of six catalytic PyrB chains organized as two trimers (C3), and six regulatory PyrI chains organized as three dimers (R2).

The catalysed reaction is carbamoyl phosphate + L-aspartate = N-carbamoyl-L-aspartate + phosphate + H(+). It participates in pyrimidine metabolism; UMP biosynthesis via de novo pathway; (S)-dihydroorotate from bicarbonate: step 2/3. Catalyzes the condensation of carbamoyl phosphate and aspartate to form carbamoyl aspartate and inorganic phosphate, the committed step in the de novo pyrimidine nucleotide biosynthesis pathway. The polypeptide is Aspartate carbamoyltransferase catalytic subunit (Methylibium petroleiphilum (strain ATCC BAA-1232 / LMG 22953 / PM1)).